A 206-amino-acid polypeptide reads, in one-letter code: High frequency lysogenization protein HflD homolog (206 aa).

This sequence belongs to the HflD family.

The protein localises to the cytoplasm. The protein resides in the cell inner membrane. The chain is High frequency lysogenization protein HflD homolog from Marinobacter nauticus (strain ATCC 700491 / DSM 11845 / VT8) (Marinobacter aquaeolei).